The sequence spans 875 residues: Phosphoenolpyruvate carboxylase (875 aa).

Catalysis depends on residues His-137 and Lys-542.

It belongs to the PEPCase type 1 family. Requires Mg(2+) as cofactor.

It catalyses the reaction oxaloacetate + phosphate = phosphoenolpyruvate + hydrogencarbonate. Forms oxaloacetate, a four-carbon dicarboxylic acid source for the tricarboxylic acid cycle. In Pseudomonas putida (strain ATCC 700007 / DSM 6899 / JCM 31910 / BCRC 17059 / LMG 24140 / F1), this protein is Phosphoenolpyruvate carboxylase.